Reading from the N-terminus, the 945-residue chain is Leucine--tRNA ligase (945 aa).

Residues 43–53 carry the 'HIGH' region motif; it reads PYPNGAIHIGH. The 'KMSKS' region signature appears at 638–642; that stretch reads KMSKS. ATP is bound at residue Lys-641.

The protein belongs to the class-I aminoacyl-tRNA synthetase family.

The protein resides in the cytoplasm. It carries out the reaction tRNA(Leu) + L-leucine + ATP = L-leucyl-tRNA(Leu) + AMP + diphosphate. This Pyrobaculum arsenaticum (strain DSM 13514 / JCM 11321 / PZ6) protein is Leucine--tRNA ligase.